Reading from the N-terminus, the 346-residue chain is MTDSYGAVSVDVGTIYLGGKEHRVKTASGVVSVIVYGDREKPALITYPDLALNHMSCFQGLFFCPEAASLLLHNFCIYHISPPGHELGAAPICPNDSVPSAENLADQILEVLNFFGLGVVMCMGVTAGAYILTLFAMKHRERVLGLILVSPLCKAPSWSEWFYNKVITNLLYYYGMCGVVKEFLLQRYFSKEVRGNVEIPESDIAQACRRLLDERQGINVLRFLDAIDRRPDISSGLKKLKCRTLIFIGDQSPFYSEAVHMAATLDRGYCALVEVQACGSMVTEEQPHAMLIPMEYFLMGYGLYRPSLFSESPRSPLSPSCISPELLSPESMGLKLKPIKTRISAA.

The protein belongs to the NDRG family. Interacts with GB1. Interacts with the heterodimers formed by GB1 and GG1, or GB1 and GG2. Interacts with RGS1. In terms of tissue distribution, expressed in root vasculature, cotyledons, leaves, petals, mature stamens and pollen grains.

It is found in the cytoplasm. Interacts with the heterotrimeric G protein beta subunit GB1 and plays an significant role in GB1-dependent regulation of lateral root formation. Involved in a signaling pathway that modulates root auxin transport and auxin gradients. Acts partially by positively regulating the auxin carrier PIN2 and AUX1. Acts, together with GB1 as positive regulator of meristem initiation and branching. GB1 and NDL1 positively regulate basipetal inflorescence auxin transport and modulate MAX2 expression in shoots, which regulates organ and lateral meristem formation by the establishment and maintenance of auxin gradients. The sequence is that of Protein NDL1 from Arabidopsis thaliana (Mouse-ear cress).